The sequence spans 486 residues: 2-succinylbenzoate--CoA ligase (486 aa).

It belongs to the ATP-dependent AMP-binding enzyme family. MenE subfamily.

It carries out the reaction 2-succinylbenzoate + ATP + CoA = 2-succinylbenzoyl-CoA + AMP + diphosphate. Its pathway is quinol/quinone metabolism; 1,4-dihydroxy-2-naphthoate biosynthesis; 1,4-dihydroxy-2-naphthoate from chorismate: step 5/7. The protein operates within quinol/quinone metabolism; menaquinone biosynthesis. Functionally, converts 2-succinylbenzoate (OSB) to 2-succinylbenzoyl-CoA (OSB-CoA). In Bacillus pumilus (strain SAFR-032), this protein is 2-succinylbenzoate--CoA ligase.